We begin with the raw amino-acid sequence, 214 residues long: Osteoclast-stimulating factor 1 (214 aa).

Residue S2 is modified to N-acetylserine. The 60-residue stretch at 12 to 71 folds into the SH3 domain; that stretch reads GQVKVFRALYTFEPRTPDELYFEEGDIIYITDMSDTNWWKGTSKGRTGLIPSNYVAEQAE. 3 ANK repeats span residues 72–101, 105–135, and 139–168; these read SIDNPLHEAAKRGNLSWLRECLDNRVGVNG, AGSTALYWACHGGHKDIVDMLFTQPNIELNQ, and LGDTALHAAAWKGYADIVQLLLAKGARTDL. At T200 the chain carries Phosphothreonine. A phosphoserine mark is found at S202 and S213.

In terms of assembly, interacts with SRC and SMN1. Interacts with FASLG.

The protein localises to the cytoplasm. In terms of biological role, induces bone resorption, acting probably through a signaling cascade which results in the secretion of factor(s) enhancing osteoclast formation and activity. This is Osteoclast-stimulating factor 1 (OSTF1) from Sus scrofa (Pig).